Here is a 108-residue protein sequence, read N- to C-terminus: Cuticle protein AM1199 (108 aa).

Gln1 carries the pyrrolidone carboxylic acid modification. Residues 26–91 (DGNFGYDFET…AESPLIPTPH (66 aa)) enclose the Chitin-binding type R&amp;R domain. O-linked (HexNAc) threonine glycosylation is present at Thr89.

In terms of tissue distribution, arthrodial membrane.

This is Cuticle protein AM1199 from Cancer pagurus (Rock crab).